Here is a 434-residue protein sequence, read N- to C-terminus: Glutamate-1-semialdehyde 2,1-aminomutase 1 (434 aa).

K270 bears the N6-(pyridoxal phosphate)lysine mark.

This sequence belongs to the class-III pyridoxal-phosphate-dependent aminotransferase family. HemL subfamily. Homodimer. Pyridoxal 5'-phosphate serves as cofactor.

Its subcellular location is the cytoplasm. The enzyme catalyses (S)-4-amino-5-oxopentanoate = 5-aminolevulinate. It functions in the pathway porphyrin-containing compound metabolism; protoporphyrin-IX biosynthesis; 5-aminolevulinate from L-glutamyl-tRNA(Glu): step 2/2. In Bacillus cereus (strain ATCC 10987 / NRS 248), this protein is Glutamate-1-semialdehyde 2,1-aminomutase 1.